The sequence spans 509 residues: uncharacterized protein (509 aa).

The RNase NYN domain occupies 358-480 (RRIVIIDAIS…IIPFIVENGE (123 aa)).

This is an uncharacterized protein from Methanocaldococcus jannaschii (strain ATCC 43067 / DSM 2661 / JAL-1 / JCM 10045 / NBRC 100440) (Methanococcus jannaschii).